Reading from the N-terminus, the 373-residue chain is Glutamate 5-kinase (373 aa).

Residue Lys12 coordinates ATP. 3 residues coordinate substrate: Ser52, Asp139, and Asn154. 216–222 (TGGMVTK) serves as a coordination point for ATP. A PUA domain is found at 281–359 (RGSICVDDGA…QELNAVLGGN (79 aa)).

It belongs to the glutamate 5-kinase family.

The protein resides in the cytoplasm. The enzyme catalyses L-glutamate + ATP = L-glutamyl 5-phosphate + ADP. It functions in the pathway amino-acid biosynthesis; L-proline biosynthesis; L-glutamate 5-semialdehyde from L-glutamate: step 1/2. Functionally, catalyzes the transfer of a phosphate group to glutamate to form L-glutamate 5-phosphate. The polypeptide is Glutamate 5-kinase (Dehalococcoides mccartyi (strain CBDB1)).